The following is a 338-amino-acid chain: GTP 3',8-cyclase (338 aa).

The 220-residue stretch at 8–227 (KLQRPLKDLR…DMIHQVMPLE (220 aa)) folds into the Radical SAM core domain. Residue arginine 17 participates in GTP binding. 2 residues coordinate [4Fe-4S] cluster: cysteine 24 and cysteine 28. Tyrosine 30 contacts S-adenosyl-L-methionine. Cysteine 31 lines the [4Fe-4S] cluster pocket. Arginine 71 provides a ligand contact to GTP. Glycine 75 is an S-adenosyl-L-methionine binding site. Threonine 102 provides a ligand contact to GTP. An S-adenosyl-L-methionine-binding site is contributed by serine 126. A GTP-binding site is contributed by lysine 163. Methionine 197 serves as a coordination point for S-adenosyl-L-methionine. [4Fe-4S] cluster-binding residues include cysteine 261 and cysteine 264. 266–268 (RAR) provides a ligand contact to GTP. Cysteine 278 serves as a coordination point for [4Fe-4S] cluster.

Belongs to the radical SAM superfamily. MoaA family. As to quaternary structure, monomer and homodimer. Requires [4Fe-4S] cluster as cofactor.

The enzyme catalyses GTP + AH2 + S-adenosyl-L-methionine = (8S)-3',8-cyclo-7,8-dihydroguanosine 5'-triphosphate + 5'-deoxyadenosine + L-methionine + A + H(+). It participates in cofactor biosynthesis; molybdopterin biosynthesis. Functionally, catalyzes the cyclization of GTP to (8S)-3',8-cyclo-7,8-dihydroguanosine 5'-triphosphate. The protein is GTP 3',8-cyclase of Bacillus anthracis (strain CDC 684 / NRRL 3495).